Here is a 955-residue protein sequence, read N- to C-terminus: Serine-aspartate repeat-containing protein C (955 aa).

The N-terminal stretch at 1 to 50 is a signal peptide; it reads MNNKKTVTNRKGMIPNRLNKFSIRKYSVGTASILVGTTLIFGLSGHEAKA. The disordered stretch occupies residues 51-166; the sequence is AEHTNGELNQ…TPKTTTIKPR (116 aa). The ligand binding A region stretch occupies residues 51 to 495; the sequence is AEHTNGELNQ…GSSTANGDQK (445 aa). Over residues 56 to 71 the composition is skewed to polar residues; sequence GELNQSKNETTAPSEN. The span at 72-83 shows a compositional bias: basic and acidic residues; sequence KTTEKVDSHQLK. Polar residues predominate over residues 84–114; the sequence is DNTQTATADQPKVTMSDSATFKETSSNMQSP. Low complexity predominate over residues 115–132; the sequence is QNATASQSTTQTSNVTTN. The segment covering 133 to 164 has biased composition (polar residues); it reads DKSSTTYSNETDKSNLTQAKDVSATPKTTTIK. 2 CNA-B domains span residues 496–606 and 607–717; these read KYNL…YKTP and KYSL…EEET. The disordered stretch occupies residues 678-935; that stretch reads TQTGTNTTED…NNSNNGTLFG (258 aa). Acidic residues-rich tracts occupy residues 685-695 and 712-894; these read TEDDKDADGGE and YYEE…DSDS. An LPXTG sorting signal motif is present at residues 918 to 922; the sequence is LPETG. Positions 920-935 are enriched in low complexity; the sequence is ETGSENNNSNNGTLFG. Pentaglycyl murein peptidoglycan amidated threonine is present on Thr-921. Residues 922–955 constitute a propeptide, removed by sortase; it reads GSENNNSNNGTLFGGLFAALGSLLLFGRRKKQNK.

Belongs to the serine-aspartate repeat-containing protein (SDr) family. As to quaternary structure, homodimerizes; via N2-Domain. Interacts with host NRXN1; this interaction mediates bacterial attachment to host cells.

The protein localises to the secreted. Its subcellular location is the cell wall. Cell surface-associated calcium-binding protein which plays an important role in adhesion and pathogenesis. Mediates interactions with components of the extracellular matrix such as host NRXN1 to promote bacterial adhesion. The sequence is that of Serine-aspartate repeat-containing protein C (sdrC) from Staphylococcus aureus (strain MW2).